Reading from the N-terminus, the 228-residue chain is 2-C-methyl-D-erythritol 4-phosphate cytidylyltransferase (228 aa).

It belongs to the IspD/TarI cytidylyltransferase family. IspD subfamily.

The catalysed reaction is 2-C-methyl-D-erythritol 4-phosphate + CTP + H(+) = 4-CDP-2-C-methyl-D-erythritol + diphosphate. It functions in the pathway isoprenoid biosynthesis; isopentenyl diphosphate biosynthesis via DXP pathway; isopentenyl diphosphate from 1-deoxy-D-xylulose 5-phosphate: step 2/6. Its function is as follows. Catalyzes the formation of 4-diphosphocytidyl-2-C-methyl-D-erythritol from CTP and 2-C-methyl-D-erythritol 4-phosphate (MEP). In Actinobacillus pleuropneumoniae serotype 5b (strain L20), this protein is 2-C-methyl-D-erythritol 4-phosphate cytidylyltransferase.